Reading from the N-terminus, the 390-residue chain is Chorismate synthase 1 (390 aa).

NADP(+) is bound by residues arginine 39 and arginine 45. The disordered stretch occupies residues 95-117 (EQEEKEMKRKVTKPRPGHADLNG). Residues 132 to 134 (RSS), 253 to 254 (NA), glycine 298, 313 to 317 (KPIPT), and arginine 339 contribute to the FMN site.

The protein belongs to the chorismate synthase family. As to quaternary structure, homotetramer. Requires FMNH2 as cofactor.

It carries out the reaction 5-O-(1-carboxyvinyl)-3-phosphoshikimate = chorismate + phosphate. Its pathway is metabolic intermediate biosynthesis; chorismate biosynthesis; chorismate from D-erythrose 4-phosphate and phosphoenolpyruvate: step 7/7. In terms of biological role, catalyzes the anti-1,4-elimination of the C-3 phosphate and the C-6 proR hydrogen from 5-enolpyruvylshikimate-3-phosphate (EPSP) to yield chorismate, which is the branch point compound that serves as the starting substrate for the three terminal pathways of aromatic amino acid biosynthesis. This reaction introduces a second double bond into the aromatic ring system. The chain is Chorismate synthase 1 from Bacillus cereus (strain ATCC 10987 / NRS 248).